A 122-amino-acid polypeptide reads, in one-letter code: MIQMQTNLDVADNSGARRVMCIKVLGGSKRKYASVGDIIVVSVKDAIPRGRVKKGDVMKAVVVRTAKDIRRADGSVIRFDSNAAVLVDNKKEPIGTRIFGPVPRELRGRNHMKIISLAPEVL.

Belongs to the universal ribosomal protein uL14 family. As to quaternary structure, part of the 50S ribosomal subunit. Forms a cluster with proteins L3 and L19. In the 70S ribosome, L14 and L19 interact and together make contacts with the 16S rRNA in bridges B5 and B8.

Functionally, binds to 23S rRNA. Forms part of two intersubunit bridges in the 70S ribosome. The protein is Large ribosomal subunit protein uL14 of Bartonella quintana (strain Toulouse) (Rochalimaea quintana).